Here is a 387-residue protein sequence, read N- to C-terminus: N6-succino-2-amino-2'-deoxyadenylate synthase (387 aa).

Catalysis depends on Ser14, which acts as the Proton acceptor. Positions 14, 15, 16, 17, and 18 each coordinate ATP. Residue Ser14 coordinates dGMP. Ser14 provides a ligand contact to Mg(2+). Residue Asn40 participates in dGMP binding. 3 residues coordinate ATP: Gly42, His43, and Thr44. Mg(2+) is bound at residue Gly42. DGMP-binding residues include Ser125, Thr126, and Arg140. ATP is bound at residue Gln207. Residue Thr222 participates in dGMP binding. Residue Thr293 participates in Mg(2+) binding. L-aspartate is bound by residues Thr293, Val294, and Arg299. Residues Asn324 and Asn327 each coordinate ATP.

Belongs to the Caudovirales PurZ family. The cofactor is Mg(2+).

The catalysed reaction is dGMP + L-aspartate + ATP = (2S)-2-amino-2'-deoxyadenylo-succinate + ADP + phosphate + 2 H(+). It participates in purine metabolism. In terms of biological role, involved in the synthesis of the atypical nucleotide dZTP (2-amino-2'-deoxyadenosine-5'-triphosphate). Catalyzes the condensation of aspartate with deoxyguanylate into dSMP (N6-succino-2-amino-2'-deoxyadenylate), which undergoes defumarylation and phosphorylation respectively by host PurB and guanylate/nucleoside diphosphate kinases to give dZTP. dZTP is integrated into the viral genome instead of adenine by the viral DNA polymerase. This Z-base probably completely replaces adenosine and forms a triple bond to the opposite T-base. The resulting non-standard viral DNA is called Z-genome. The chemically modified DNA is probably harder for the host bacteria to digest with nucleases or restriction enzymes. The sequence is that of N6-succino-2-amino-2'-deoxyadenylate synthase from Acinetobacter phage SH-Ab 15497.